The sequence spans 789 residues: Ribosomal protein S6 kinase alpha-5 (789 aa).

Positions 39-308 (FELLKVLGTG…ADEIKQHPFF (270 aa)) constitute a Protein kinase 1 domain. Residues 45 to 53 (LGTGAYGKV) and Lys-71 contribute to the ATP site. Asp-167 serves as the catalytic Proton acceptor. The residue at position 202 (Ser-202) is a Phosphoserine; by autocatalysis. An AGC-kinase C-terminal domain is found at 309–377 (QNINWDDLAA…VAPSILFKRN (69 aa)). Ser-350 carries the phosphoserine modification. A phosphoserine; by autocatalysis mark is found at Ser-366 and Ser-371. The region spanning 416-677 (DLKEKPLGEG…MSSLRYNEWL (262 aa)) is the Protein kinase 2 domain. ATP-binding positions include 422 to 430 (LGEGSFSIC) and Lys-445. Asp-534 (proton acceptor) is an active-site residue. Phosphothreonine is present on residues Thr-571 and Thr-690. Residues 731 to 789 (AKRRKMKKTSTSTETRSSSSESSHSSSSHSHGKTTPTKTLQPTNPTDSNNPETIFQFSD) are disordered. The segment covering 739–769 (TSTSTETRSSSSESSHSSSSHSHGKTTPTKT) has biased composition (low complexity). Ser-740, Ser-742, and Ser-748 each carry phosphoserine; by autocatalysis. Residues 770 to 789 (LQPTNPTDSNNPETIFQFSD) show a composition bias toward polar residues.

This sequence belongs to the protein kinase superfamily. AGC Ser/Thr protein kinase family. S6 kinase subfamily. The cofactor is Mg(2+). Ser-366 and Thr-571 phosphorylation is required for kinase activity. Ser-366 and Ser-202 are autophosphorylated by the C-terminal kinase domain, and their phosphorylation is essential for the catalytic activity of the N-terminal kinase domain. Phosphorylated at Ser-350, Thr-571 and Thr-690 by MAP kinases. Autophosphorylated at Ser-740, Ser-742 and Ser-748 by the N-terminal kinase domain. Widely expressed with high levels in heart, brain and placenta. Less abundant in lung, kidney and liver.

It is found in the nucleus. It carries out the reaction L-seryl-[protein] + ATP = O-phospho-L-seryl-[protein] + ADP + H(+). The catalysed reaction is L-threonyl-[protein] + ATP = O-phospho-L-threonyl-[protein] + ADP + H(+). Its activity is regulated as follows. Activated by phosphorylation at Ser-350, Thr-571 and Thr-690 by MAP kinases, and by further autophosphorylation of Ser-202, Ser-366 and Ser-371 by the activated C-terminal kinase domain. The active N-terminal kinase domain finally phosphorylates downstream substrates, as well as Ser-740, Ser-742 and Ser-748 in its own C-terminal region. Functionally, serine/threonine-protein kinase that is required for the mitogen or stress-induced phosphorylation of the transcription factors CREB1 and ATF1 and that contributes to gene activation by histone phosphorylation. Phosphorylates CREB1 and ATF1 in response to mitogenic or stress stimuli such as UV-C irradiation, epidermal growth factor (EGF) and anisomycin. Directly represses transcription via phosphorylation of 'Ser-1' of histone H2A. Phosphorylates 'Ser-10' of histone H3 in response to mitogenics, stress stimuli and EGF, which results in the transcriptional activation of several immediate early genes, including proto-oncogenes c-fos/FOS and c-jun/JUN. May also phosphorylate 'Ser-28' of histone H3. Mediates the mitogen- and stress-induced phosphorylation of high mobility group protein 1 (HMGN1/HMG14). The chain is Ribosomal protein S6 kinase alpha-5 (RPS6KA5) from Gallus gallus (Chicken).